Here is a 214-residue protein sequence, read N- to C-terminus: tRNA (guanine-N(7)-)-methyltransferase (214 aa).

Positions 44, 69, 96, and 118 each coordinate S-adenosyl-L-methionine. Asp118 is an active-site residue. Lys122 serves as a coordination point for substrate. Residues Lys124–Arg129 are interaction with RNA. Substrate is bound by residues Asp154 and Thr191 to Glu194.

This sequence belongs to the class I-like SAM-binding methyltransferase superfamily. TrmB family.

The enzyme catalyses guanosine(46) in tRNA + S-adenosyl-L-methionine = N(7)-methylguanosine(46) in tRNA + S-adenosyl-L-homocysteine. It functions in the pathway tRNA modification; N(7)-methylguanine-tRNA biosynthesis. Its function is as follows. Catalyzes the formation of N(7)-methylguanine at position 46 (m7G46) in tRNA. The sequence is that of tRNA (guanine-N(7)-)-methyltransferase from Enterococcus faecalis (strain ATCC 700802 / V583).